The primary structure comprises 1580 residues: Pentafunctional AROM polypeptide (1580 aa).

Positions M1–N381 are 3-dehydroquinate synthase. NAD(+) is bound by residues D44 to T46, E81 to K84, G114 to V116, and D119. R130 is a 7-phospho-2-dehydro-3-deoxy-D-arabino-heptonate binding site. Residue T139–T140 coordinates NAD(+). The 7-phospho-2-dehydro-3-deoxy-D-arabino-heptonate site is built by D146 and K152. Residue K161 coordinates NAD(+). N162 is a binding site for 7-phospho-2-dehydro-3-deoxy-D-arabino-heptonate. NAD(+) is bound by residues F179–T182 and N190. Position 194 (E194) interacts with Zn(2+). K247 is a 7-phospho-2-dehydro-3-deoxy-D-arabino-heptonate binding site. E257 serves as the catalytic Proton acceptor; for 3-dehydroquinate synthase activity. Residues R261 to N265 and H268 each bind 7-phospho-2-dehydro-3-deoxy-D-arabino-heptonate. H268 is a binding site for Zn(2+). H272 serves as the catalytic Proton acceptor; for 3-dehydroquinate synthase activity. The 7-phospho-2-dehydro-3-deoxy-D-arabino-heptonate site is built by H284 and K353. H284 contacts Zn(2+). Residues V394–A838 form an EPSP synthase region. The active-site For EPSP synthase activity is the C820. The shikimate kinase stretch occupies residues A857–S1048. G863–T870 is an ATP binding site. The tract at residues L1049–E1269 is 3-dehydroquinase. H1172 serves as the catalytic Proton acceptor; for 3-dehydroquinate dehydratase activity. The Schiff-base intermediate with substrate; for 3-dehydroquinate dehydratase activity role is filled by K1200. Residues S1282 to I1580 form a shikimate dehydrogenase region.

It in the N-terminal section; belongs to the sugar phosphate cyclases superfamily. Dehydroquinate synthase family. The protein in the 2nd section; belongs to the EPSP synthase family. In the 3rd section; belongs to the shikimate kinase family. This sequence in the 4th section; belongs to the type-I 3-dehydroquinase family. It in the C-terminal section; belongs to the shikimate dehydrogenase family. In terms of assembly, homodimer. Zn(2+) is required as a cofactor.

The protein localises to the cytoplasm. The enzyme catalyses 7-phospho-2-dehydro-3-deoxy-D-arabino-heptonate = 3-dehydroquinate + phosphate. It catalyses the reaction 3-dehydroquinate = 3-dehydroshikimate + H2O. It carries out the reaction shikimate + NADP(+) = 3-dehydroshikimate + NADPH + H(+). The catalysed reaction is shikimate + ATP = 3-phosphoshikimate + ADP + H(+). The enzyme catalyses 3-phosphoshikimate + phosphoenolpyruvate = 5-O-(1-carboxyvinyl)-3-phosphoshikimate + phosphate. It functions in the pathway metabolic intermediate biosynthesis; chorismate biosynthesis; chorismate from D-erythrose 4-phosphate and phosphoenolpyruvate: step 2/7. Its pathway is metabolic intermediate biosynthesis; chorismate biosynthesis; chorismate from D-erythrose 4-phosphate and phosphoenolpyruvate: step 3/7. The protein operates within metabolic intermediate biosynthesis; chorismate biosynthesis; chorismate from D-erythrose 4-phosphate and phosphoenolpyruvate: step 4/7. It participates in metabolic intermediate biosynthesis; chorismate biosynthesis; chorismate from D-erythrose 4-phosphate and phosphoenolpyruvate: step 5/7. It functions in the pathway metabolic intermediate biosynthesis; chorismate biosynthesis; chorismate from D-erythrose 4-phosphate and phosphoenolpyruvate: step 6/7. In terms of biological role, the AROM polypeptide catalyzes 5 consecutive enzymatic reactions in prechorismate polyaromatic amino acid biosynthesis. The sequence is that of Pentafunctional AROM polypeptide from Uncinocarpus reesii (strain UAMH 1704).